The sequence spans 284 residues: Diaminopimelate epimerase (284 aa).

Residues N14 and N67 each contribute to the substrate site. The Proton donor role is filled by C76. Substrate contacts are provided by residues 77–78, N166, N199, and 217–218; these read GN and ER. The active-site Proton acceptor is the C226. Residue 227 to 228 participates in substrate binding; it reads GT.

Belongs to the diaminopimelate epimerase family. As to quaternary structure, homodimer.

It is found in the cytoplasm. It carries out the reaction (2S,6S)-2,6-diaminopimelate = meso-2,6-diaminopimelate. It functions in the pathway amino-acid biosynthesis; L-lysine biosynthesis via DAP pathway; DL-2,6-diaminopimelate from LL-2,6-diaminopimelate: step 1/1. Catalyzes the stereoinversion of LL-2,6-diaminopimelate (L,L-DAP) to meso-diaminopimelate (meso-DAP), a precursor of L-lysine and an essential component of the bacterial peptidoglycan. In Bacillus subtilis (strain 168), this protein is Diaminopimelate epimerase.